The chain runs to 38 residues: CHH precursor-related peptide (38 aa).

The interval G18–E38 is disordered.

Produced by the medulla terminalis X-organ in the eyestalks and transported to the sinus gland where it is stored and released.

The protein localises to the secreted. The sequence is that of CHH precursor-related peptide from Cancer pagurus (Rock crab).